The following is a 209-amino-acid chain: uncharacterized protein (209 aa).

This is an uncharacterized protein from Sulfolobus islandicus rod-shaped virus 1 (SIRV-1).